We begin with the raw amino-acid sequence, 186 residues long: Large ribosomal subunit protein uL10 (186 aa).

Belongs to the universal ribosomal protein uL10 family. Part of the ribosomal stalk of the 50S ribosomal subunit. The N-terminus interacts with L11 and the large rRNA to form the base of the stalk. The C-terminus forms an elongated spine to which L12 dimers bind in a sequential fashion forming a multimeric L10(L12)X complex.

Its function is as follows. Forms part of the ribosomal stalk, playing a central role in the interaction of the ribosome with GTP-bound translation factors. This Streptomyces virginiae (Streptomyces cinnamonensis) protein is Large ribosomal subunit protein uL10 (rplJ).